The primary structure comprises 351 residues: Increased glyphosate resistance protein (351 aa).

The span at 1 to 18 shows a compositional bias: basic and acidic residues; it reads MHREDDSTSTGRREERLS. The disordered stretch occupies residues 1–29; that stretch reads MHREDDSTSTGRREERLSTGKGDSLQPGP.

Its function is as follows. Confers an increase in glyphosate resistance when expressed in E.coli. This Pseudomonas sp. (strain PG2982) protein is Increased glyphosate resistance protein.